A 509-amino-acid chain; its full sequence is ATP synthase subunit alpha, mitochondrial (509 aa).

G171–T178 provides a ligand contact to ATP.

Belongs to the ATPase alpha/beta chains family. F-type ATPases have 2 components, CF(1) - the catalytic core - and CF(0) - the membrane proton channel. CF(1) has five subunits: alpha(3), beta(3), gamma(1), delta(1), epsilon(1). CF(0) has three main subunits: a, b and c.

The protein resides in the mitochondrion. It is found in the mitochondrion inner membrane. In terms of biological role, mitochondrial membrane ATP synthase (F(1)F(0) ATP synthase or Complex V) produces ATP from ADP in the presence of a proton gradient across the membrane which is generated by electron transport complexes of the respiratory chain. F-type ATPases consist of two structural domains, F(1) - containing the extramembraneous catalytic core, and F(0) - containing the membrane proton channel, linked together by a central stalk and a peripheral stalk. During catalysis, ATP synthesis in the catalytic domain of F(1) is coupled via a rotary mechanism of the central stalk subunits to proton translocation. Subunits alpha and beta form the catalytic core in F(1). Rotation of the central stalk against the surrounding alpha(3)beta(3) subunits leads to hydrolysis of ATP in three separate catalytic sites on the beta subunits. Subunit alpha does not bear the catalytic high-affinity ATP-binding sites. The polypeptide is ATP synthase subunit alpha, mitochondrial (ATPA) (Triticum aestivum (Wheat)).